The following is a 330-amino-acid chain: Lactamase-like protein nscB (330 aa).

Residues H97, H99, D101, and H102 each contribute to the Zn(2+) site. Catalysis depends on D101, which acts as the Proton donor/acceptor.

It belongs to the metallo-beta-lactamase superfamily. Zn(2+) is required as a cofactor.

Its pathway is secondary metabolite biosynthesis. Lactamase-like protein; part of the gene cluster that mediates the biosynthesis of neosartoricin, a prenylated anthracenone that exhibits T-cell antiproliferative activity, suggestive of a physiological role as an immunosuppressive agent. The non-reducing polyketide synthase nscA probably synthesizes and cyclizes the decaketide backbone. The hydrolase nscB then mediates the product release through hydrolysis followed by spontaneous decarboxylation. The prenyltransferase nscD catalyzes the addition of the dimethylallyl group to the aromatic C5. The FAD-dependent monooxygenase nscC is then responsible for the stereospecific hydroxylation at C2. There is no gene encoding O-acetyltransferase in the nsc gene cluster; thus, the last step of 2-O-acetylation leading to neosartoricin may be catalyzed by an unidentified O-acetyltransferase. This is Lactamase-like protein nscB from Aspergillus fumigatus (strain ATCC MYA-4609 / CBS 101355 / FGSC A1100 / Af293) (Neosartorya fumigata).